A 301-amino-acid chain; its full sequence is tRNA pseudouridine synthase B (301 aa).

Residue aspartate 48 is the Nucleophile of the active site.

Belongs to the pseudouridine synthase TruB family. Type 1 subfamily.

It carries out the reaction uridine(55) in tRNA = pseudouridine(55) in tRNA. In terms of biological role, responsible for synthesis of pseudouridine from uracil-55 in the psi GC loop of transfer RNAs. The sequence is that of tRNA pseudouridine synthase B from Mycobacterium ulcerans (strain Agy99).